The following is a 199-amino-acid chain: Charged multivesicular body protein 1b (199 aa).

Residues 26–48 are a coiled coil; that stretch reads DKEEKAEKAKIKKAIQKGNMEVA. The tract at residues 132-156 is interaction with IST1; that stretch reads MEDTMSSTTTLTTPQGQVDMLLQEM. Positions 167 to 199 are disordered; the sequence is ELPQGQTGSVGTSVASAEQDELSQRLARLRDQV. Positions 170-182 are enriched in polar residues; it reads QGQTGSVGTSVAS. The interaction with SPAST stretch occupies residues 174–199; sequence GSVGTSVASAEQDELSQRLARLRDQV. A coiled-coil region spans residues 178–199; sequence TSVASAEQDELSQRLARLRDQV. An interaction with VPS4A, MITD1 and STAMBP region spans residues 180-196; it reads VASAEQDELSQRLARLR. An interaction with VTA1 region spans residues 180 to 199; that stretch reads VASAEQDELSQRLARLRDQV. Residues 183 to 199 are interaction with VPS4B; it reads AEQDELSQRLARLRDQV. Positions 186–196 match the MIT-interacting motif motif; that stretch reads DELSQRLARLR.

Belongs to the SNF7 family. Probable peripherally associated component of the endosomal sorting required for transport complex III (ESCRT-III). ESCRT-III components are thought to multimerize to form a flat lattice on the perimeter membrane of the endosome. Several assembly forms of ESCRT-III may exist that interact and act sequentially. Interacts with CHMP1A. Interacts with VTA1; the interaction probably involves the open conformation of CHMP1B. Interacts with CHMP2A. Interacts with VPS4A; the interaction is direct. Interacts with VPS4B; the interaction is direct. Interacts with SPAST (via MIT domain); the interaction is direct. Interacts with IST1. Interacts with MITD1. Interacts with STAMBP.

Its subcellular location is the cytoplasm. The protein resides in the cytosol. It is found in the endosome. It localises to the late endosome membrane. In terms of biological role, probable peripherally associated component of the endosomal sorting required for transport complex III (ESCRT-III) which is involved in multivesicular bodies (MVBs) formation and sorting of endosomal cargo proteins into MVBs. MVBs contain intraluminal vesicles (ILVs) that are generated by invagination and scission from the limiting membrane of the endosome and mostly are delivered to lysosomes enabling degradation of membrane proteins, such as stimulated growth factor receptors, lysosomal enzymes and lipids. The MVB pathway appears to require the sequential function of ESCRT-O, -I,-II and -III complexes. ESCRT-III proteins mostly dissociate from the invaginating membrane before the ILV is released. The ESCRT machinery also functions in topologically equivalent membrane fission events, such as the terminal stages of cytokinesis and the budding of enveloped viruses (lentiviruses). ESCRT-III proteins are believed to mediate the necessary vesicle extrusion and/or membrane fission activities, possibly in conjunction with the AAA ATPase VPS4. Involved in cytokinesis. Involved in recruiting VPS4A and/or VPS4B and SPAST to the midbody of dividing cells. This chain is Charged multivesicular body protein 1b (CHMP1B), found in Bos taurus (Bovine).